We begin with the raw amino-acid sequence, 120 residues long: NAD(P)H-quinone oxidoreductase subunit 3, chloroplastic (120 aa).

3 helical membrane passes run 9-29 (YFWL…PISS), 64-84 (MFAS…PWAM), and 89-109 (LGVP…VGSV).

This sequence belongs to the complex I subunit 3 family. As to quaternary structure, NDH is composed of at least 16 different subunits, 5 of which are encoded in the nucleus.

It is found in the plastid. The protein resides in the chloroplast thylakoid membrane. It carries out the reaction a plastoquinone + NADH + (n+1) H(+)(in) = a plastoquinol + NAD(+) + n H(+)(out). It catalyses the reaction a plastoquinone + NADPH + (n+1) H(+)(in) = a plastoquinol + NADP(+) + n H(+)(out). NDH shuttles electrons from NAD(P)H:plastoquinone, via FMN and iron-sulfur (Fe-S) centers, to quinones in the photosynthetic chain and possibly in a chloroplast respiratory chain. The immediate electron acceptor for the enzyme in this species is believed to be plastoquinone. Couples the redox reaction to proton translocation, and thus conserves the redox energy in a proton gradient. The protein is NAD(P)H-quinone oxidoreductase subunit 3, chloroplastic of Huperzia lucidula (Shining clubmoss).